The following is a 129-amino-acid chain: DNA-directed RNA polymerase III subunit rpc9 (129 aa).

This sequence belongs to the eukaryotic RPC9 RNA polymerase subunit family. Component of the RNA polymerase III (Pol III) complex.

Its subcellular location is the cytoplasm. The protein localises to the nucleus. In terms of biological role, DNA-dependent RNA polymerase catalyzes the transcription of DNA into RNA using the four ribonucleoside triphosphates as substrates. Specific peripheric component of RNA polymerase III which synthesizes small RNAs, such as 5S rRNA and tRNAs. The sequence is that of DNA-directed RNA polymerase III subunit rpc9 (rpc17) from Schizosaccharomyces pombe (strain 972 / ATCC 24843) (Fission yeast).